The following is a 151-amino-acid chain: 3-hydroxyacyl-[acyl-carrier-protein] dehydratase FabZ (151 aa).

The active site involves His-52.

This sequence belongs to the thioester dehydratase family. FabZ subfamily.

The protein localises to the cytoplasm. The catalysed reaction is a (3R)-hydroxyacyl-[ACP] = a (2E)-enoyl-[ACP] + H2O. In terms of biological role, involved in unsaturated fatty acids biosynthesis. Catalyzes the dehydration of short chain beta-hydroxyacyl-ACPs and long chain saturated and unsaturated beta-hydroxyacyl-ACPs. In Lactococcus lactis subsp. lactis (strain IL1403) (Streptococcus lactis), this protein is 3-hydroxyacyl-[acyl-carrier-protein] dehydratase FabZ (fabZ1).